The primary structure comprises 299 residues: MKTKQWPSKTERHKRFGSVPPVAGKKPIHKEEMADLQNMPNDFLFALDSVGIHNVKHPCIIQSNLKPYEQTTVGTFSLTTGLEQMSKGINMSRLTELLQEYHQTGFILSLKNMQAFTKDLAERMEQSSAHVHVTFPWFFERESPSLNKIGLAHAEARLNVHFDETLGFTHEVGLTAAVTTLCPCSKEISEYSAHNQRGYVTIKATFYEPTEGSDDWKVTLLEAAESNASSILYPVLKRPDEKAVTEKAYENPRFVEDMVRLTAADLYENETIKAFTVECRNEESIHQHDAIATLSYSKK.

Positions Met-1–Lys-25 are disordered.

The protein belongs to the GTP cyclohydrolase IV family.

It carries out the reaction GTP + H2O = 7,8-dihydroneopterin 3'-triphosphate + formate + H(+). The protein operates within cofactor biosynthesis; 7,8-dihydroneopterin triphosphate biosynthesis; 7,8-dihydroneopterin triphosphate from GTP: step 1/1. Its function is as follows. Converts GTP to 7,8-dihydroneopterin triphosphate. The protein is GTP cyclohydrolase FolE2 of Halalkalibacterium halodurans (strain ATCC BAA-125 / DSM 18197 / FERM 7344 / JCM 9153 / C-125) (Bacillus halodurans).